The following is a 153-amino-acid chain: Calmodulin-like protein 4 (153 aa).

4 EF-hand domains span residues 8–43, 44–79, 81–116, and 117–152; these read DQIN…LGAS, PTPG…QIKQ, DPKK…LGEK, and LTHK…PVRD.

The protein belongs to the calmodulin family. As to quaternary structure, interacts with MYO7B; the interaction mediates the association of CALML4 with the IMAC/intermicrovillar adhesion complex. Interacts with MYO7A. In terms of tissue distribution, expressed in the small intestine, in both mature enterocytes on the villus surface and immature cells that reside in the crypt stem-cell niche.

The protein resides in the cell projection. Its subcellular location is the microvillus. In terms of biological role, as part of the intermicrovillar adhesion complex/IMAC plays a role in epithelial brush border differentiation, controlling microvilli organization and length. Acts as a light chain for MYO7B and is required for efficient targeting of the IMAC to the tips of border brush microvilli. The polypeptide is Calmodulin-like protein 4 (Calml4) (Mus musculus (Mouse)).